A 463-amino-acid polypeptide reads, in one-letter code: L-seryl-tRNA(Sec) selenium transferase (463 aa).

K295 is subject to N6-(pyridoxal phosphate)lysine.

The protein belongs to the SelA family. As to quaternary structure, homodecamer; pentamer of dimers. Binds only one seryl-tRNA(Sec) per dimer. It depends on pyridoxal 5'-phosphate as a cofactor.

It is found in the cytoplasm. The enzyme catalyses L-seryl-tRNA(Sec) + selenophosphate + H(+) = L-selenocysteinyl-tRNA(Sec) + phosphate. Its pathway is aminoacyl-tRNA biosynthesis; selenocysteinyl-tRNA(Sec) biosynthesis; selenocysteinyl-tRNA(Sec) from L-seryl-tRNA(Sec) (bacterial route): step 1/1. Converts seryl-tRNA(Sec) to selenocysteinyl-tRNA(Sec) required for selenoprotein biosynthesis. The protein is L-seryl-tRNA(Sec) selenium transferase of Escherichia coli O139:H28 (strain E24377A / ETEC).